A 177-amino-acid chain; its full sequence is Bifunctional protein PyrR (177 aa).

Residues 99 to 111 (VVLVDDVIYKGRT) carry the PRPP-binding motif.

This sequence belongs to the purine/pyrimidine phosphoribosyltransferase family. PyrR subfamily.

The enzyme catalyses UMP + diphosphate = 5-phospho-alpha-D-ribose 1-diphosphate + uracil. In terms of biological role, regulates the transcription of the pyrimidine nucleotide (pyr) operon in response to exogenous pyrimidines. Functionally, also displays a weak uracil phosphoribosyltransferase activity which is not physiologically significant. The sequence is that of Bifunctional protein PyrR from Gloeothece citriformis (strain PCC 7424) (Cyanothece sp. (strain PCC 7424)).